Reading from the N-terminus, the 411-residue chain is Protein translocase subunit SecY (411 aa).

10 helical membrane passes run Phe-13–Asp-33, Ile-52–Ile-72, Ala-111–Phe-131, Phe-135–Leu-155, Gly-163–Leu-180, Ser-197–Val-217, Gly-252–Leu-272, Leu-291–Val-311, Phe-350–Ala-370, and Gly-377–Ile-397.

The protein belongs to the SecY/SEC61-alpha family. Component of the plastid Sec protein translocase complex, which is composed of at least SecY, SecE and SecG.

It localises to the plastid. The protein resides in the chloroplast thylakoid membrane. The central subunit of the protein translocation channel SecYE. Consists of two halves formed by TMs 1-5 and 6-10. These two domains form a lateral gate at the front which open onto the bilayer between TMs 2 and 7, and are clamped together by SecE at the back. The channel is closed by both a pore ring composed of hydrophobic SecY resides and a short helix (helix 2A) on the extracellular side of the membrane which forms a plug. This chain is Protein translocase subunit SecY, found in Porphyra purpurea (Red seaweed).